The sequence spans 187 residues: UPF0301 protein PMI0339 (187 aa).

It belongs to the UPF0301 (AlgH) family.

In Proteus mirabilis (strain HI4320), this protein is UPF0301 protein PMI0339.